The primary structure comprises 529 residues: Bifunctional purine biosynthesis protein PurH (529 aa).

An MGS-like domain is found at 1-148 (MQQRRPIRRA…KNHKDVAIVV (148 aa)). Lysine 287 carries the N6-acetyllysine modification.

This sequence belongs to the PurH family.

It catalyses the reaction (6R)-10-formyltetrahydrofolate + 5-amino-1-(5-phospho-beta-D-ribosyl)imidazole-4-carboxamide = 5-formamido-1-(5-phospho-D-ribosyl)imidazole-4-carboxamide + (6S)-5,6,7,8-tetrahydrofolate. The enzyme catalyses IMP + H2O = 5-formamido-1-(5-phospho-D-ribosyl)imidazole-4-carboxamide. It functions in the pathway purine metabolism; IMP biosynthesis via de novo pathway; 5-formamido-1-(5-phospho-D-ribosyl)imidazole-4-carboxamide from 5-amino-1-(5-phospho-D-ribosyl)imidazole-4-carboxamide (10-formyl THF route): step 1/1. Its pathway is purine metabolism; IMP biosynthesis via de novo pathway; IMP from 5-formamido-1-(5-phospho-D-ribosyl)imidazole-4-carboxamide: step 1/1. The chain is Bifunctional purine biosynthesis protein PurH from Escherichia coli O139:H28 (strain E24377A / ETEC).